Reading from the N-terminus, the 164-residue chain is uncharacterized protein (164 aa).

Residues 1–25 (MMKTVKHLLCCAIAASALISTGVHA) form the signal peptide.

This is an uncharacterized protein from Escherichia coli (strain K12).